The following is a 116-amino-acid chain: Protein Wnt-5a (116 aa).

A lipid anchor (O-palmitoleoyl serine; by PORCN) is attached at Ser-1. N-linked (GlcNAc...) asparagine glycosylation is found at Asn-69 and Asn-83. Cys-82 and Cys-97 form a disulfide bridge.

This sequence belongs to the Wnt family. Palmitoleoylation is required for efficient binding to frizzled receptors. Depalmitoleoylation leads to Wnt signaling pathway inhibition.

It is found in the secreted. Its subcellular location is the extracellular space. The protein localises to the extracellular matrix. Ligand for members of the frizzled family of seven transmembrane receptors. Can activate or inhibit canonical Wnt signaling, depending on receptor context. Required during embryogenesis for extension of the primary anterior-posterior axis. This is Protein Wnt-5a (WNT-5A) from Plestiodon skiltonianus (Western skink).